A 745-amino-acid polypeptide reads, in one-letter code: Cellulose synthase-like protein E2 (745 aa).

Over residues 1–14 (MAGSGGGVVSGGRQ) the composition is skewed to gly residues. The tract at residues 1-20 (MAGSGGGVVSGGRQRGPPLF) is disordered. The next 2 membrane-spanning stretches (helical) occupy residues 29–49 (AMAA…LIWL) and 66–86 (WAWL…VLTL). Catalysis depends on residues Asp155 and Asp458. 5 consecutive transmembrane segments (helical) span residues 541–561 (FPTL…ISLF), 568–588 (WFIP…AESL), 658–678 (AMFV…VLGI), 686–706 (GPGG…IVAI), and 723–743 (LPAS…ILSI).

It belongs to the glycosyltransferase 2 family. Plant cellulose synthase-like E subfamily.

The protein resides in the golgi apparatus membrane. Thought to be a Golgi-localized beta-glycan synthase that polymerize the backbones of noncellulosic polysaccharides (hemicelluloses) of plant cell wall. This chain is Cellulose synthase-like protein E2 (CSLE2), found in Oryza sativa subsp. japonica (Rice).